A 447-amino-acid chain; its full sequence is Gamma-glutamyl phosphate reductase (447 aa).

The protein belongs to the gamma-glutamyl phosphate reductase family.

It localises to the cytoplasm. It catalyses the reaction L-glutamate 5-semialdehyde + phosphate + NADP(+) = L-glutamyl 5-phosphate + NADPH + H(+). The protein operates within amino-acid biosynthesis; L-proline biosynthesis; L-glutamate 5-semialdehyde from L-glutamate: step 2/2. In terms of biological role, catalyzes the NADPH-dependent reduction of L-glutamate 5-phosphate into L-glutamate 5-semialdehyde and phosphate. The product spontaneously undergoes cyclization to form 1-pyrroline-5-carboxylate. The chain is Gamma-glutamyl phosphate reductase from Methanosarcina barkeri (strain Fusaro / DSM 804).